Consider the following 117-residue polypeptide: Large ribosomal subunit protein bL19 (117 aa).

This sequence belongs to the bacterial ribosomal protein bL19 family.

In terms of biological role, this protein is located at the 30S-50S ribosomal subunit interface and may play a role in the structure and function of the aminoacyl-tRNA binding site. In Thioalkalivibrio sulfidiphilus (strain HL-EbGR7), this protein is Large ribosomal subunit protein bL19.